The chain runs to 139 residues: S-adenosylmethionine decarboxylase proenzyme (139 aa).

The Schiff-base intermediate with substrate; via pyruvic acid role is filled by serine 63. Serine 63 is subject to Pyruvic acid (Ser); by autocatalysis. Histidine 68 functions as the Proton acceptor; for processing activity in the catalytic mechanism. The Proton donor; for catalytic activity role is filled by cysteine 83.

Belongs to the prokaryotic AdoMetDC family. Type 1 subfamily. Heterotetramer of two alpha and two beta chains arranged as a dimer of alpha/beta heterodimers. Requires pyruvate as cofactor. In terms of processing, is synthesized initially as an inactive proenzyme. Formation of the active enzyme involves a self-maturation process in which the active site pyruvoyl group is generated from an internal serine residue via an autocatalytic post-translational modification. Two non-identical subunits are generated from the proenzyme in this reaction, and the pyruvate is formed at the N-terminus of the alpha chain, which is derived from the carboxyl end of the proenzyme. The post-translation cleavage follows an unusual pathway, termed non-hydrolytic serinolysis, in which the side chain hydroxyl group of the serine supplies its oxygen atom to form the C-terminus of the beta chain, while the remainder of the serine residue undergoes an oxidative deamination to produce ammonia and the pyruvoyl group blocking the N-terminus of the alpha chain.

The enzyme catalyses S-adenosyl-L-methionine + H(+) = S-adenosyl 3-(methylsulfanyl)propylamine + CO2. Its pathway is amine and polyamine biosynthesis; S-adenosylmethioninamine biosynthesis; S-adenosylmethioninamine from S-adenosyl-L-methionine: step 1/1. Functionally, catalyzes the decarboxylation of S-adenosylmethionine to S-adenosylmethioninamine (dcAdoMet), the propylamine donor required for the synthesis of the polyamines spermine and spermidine from the diamine putrescine. The polypeptide is S-adenosylmethionine decarboxylase proenzyme (Pyrococcus furiosus (strain ATCC 43587 / DSM 3638 / JCM 8422 / Vc1)).